A 323-amino-acid chain; its full sequence is Ubiquinone biosynthesis protein COQ4, mitochondrial (323 aa).

Zn(2+)-binding residues include H203, D204, H207, and E219.

Belongs to the COQ4 family. Component of a multi-subunit COQ enzyme complex, composed of at least COQ3, COQ4, COQ5, COQ6, COQ7 and COQ9. Zn(2+) serves as cofactor.

The protein resides in the mitochondrion inner membrane. The enzyme catalyses a 4-hydroxy-3-methoxy-5-(all-trans-polyprenyl)benzoate + H(+) = a 2-methoxy-6-(all-trans-polyprenyl)phenol + CO2. Its pathway is cofactor biosynthesis; ubiquinone biosynthesis. Its function is as follows. Lyase that catalyzes the C1-decarboxylation of 4-hydroxy-3-methoxy-5-(all-trans-polyprenyl)benzoic acid into 2-methoxy-6-(all-trans-polyprenyl)phenol during ubiquinone biosynthesis. This chain is Ubiquinone biosynthesis protein COQ4, mitochondrial, found in Eremothecium gossypii (strain ATCC 10895 / CBS 109.51 / FGSC 9923 / NRRL Y-1056) (Yeast).